A 351-amino-acid polypeptide reads, in one-letter code: Phosphoribosylformylglycinamidine cyclo-ligase (351 aa).

It belongs to the AIR synthase family.

It is found in the cytoplasm. The catalysed reaction is 2-formamido-N(1)-(5-O-phospho-beta-D-ribosyl)acetamidine + ATP = 5-amino-1-(5-phospho-beta-D-ribosyl)imidazole + ADP + phosphate + H(+). The protein operates within purine metabolism; IMP biosynthesis via de novo pathway; 5-amino-1-(5-phospho-D-ribosyl)imidazole from N(2)-formyl-N(1)-(5-phospho-D-ribosyl)glycinamide: step 2/2. In Burkholderia cenocepacia (strain HI2424), this protein is Phosphoribosylformylglycinamidine cyclo-ligase.